The primary structure comprises 380 residues: Cytochrome b (380 aa).

4 helical membrane passes run 34–54 (FGSL…LLAM), 78–99 (WLIR…FLHI), 114–134 (WNTG…GYVL), and 179–199 (FFAL…IHLT). The heme b site is built by H84 and H98. 2 residues coordinate heme b: H183 and H197. H202 serves as a coordination point for a ubiquinone. 4 helical membrane passes run 227-247 (LKDI…ALFS), 289-309 (LGGV…PFLH), 321-341 (LSQI…WIGS), and 348-368 (FIII…ILFP).

The protein belongs to the cytochrome b family. As to quaternary structure, the cytochrome bc1 complex contains 11 subunits: 3 respiratory subunits (MT-CYB, CYC1 and UQCRFS1), 2 core proteins (UQCRC1 and UQCRC2) and 6 low-molecular weight proteins (UQCRH/QCR6, UQCRB/QCR7, UQCRQ/QCR8, UQCR10/QCR9, UQCR11/QCR10 and a cleavage product of UQCRFS1). This cytochrome bc1 complex then forms a dimer. The cofactor is heme b.

It localises to the mitochondrion inner membrane. Component of the ubiquinol-cytochrome c reductase complex (complex III or cytochrome b-c1 complex) that is part of the mitochondrial respiratory chain. The b-c1 complex mediates electron transfer from ubiquinol to cytochrome c. Contributes to the generation of a proton gradient across the mitochondrial membrane that is then used for ATP synthesis. The protein is Cytochrome b (MT-CYB) of Pavo muticus (Green peafowl).